Reading from the N-terminus, the 212-residue chain is MHILVTGFAPFDNQNINPSWEAVTQLEDIIGTHTIDKLKLPTSFKKVDNIINKTLASNHYDVVLAIGQAGGRNAITPERVAINIDDARIPDNDDFQPIDQAIHLDGAPAYFSNLPVKAMTQSIINQGLPGALSNSAGTYVCNHVLYHLGYLQDKHYPHLRFGFIHVPYIPEQVIGKPDTPSMPLEKIVAGLTAAIEAISNDEDLRIALGTTE.

Residues Glu-78, Cys-141, and His-165 contribute to the active site.

Belongs to the peptidase C15 family. In terms of assembly, homotetramer.

It is found in the cytoplasm. The enzyme catalyses Release of an N-terminal pyroglutamyl group from a polypeptide, the second amino acid generally not being Pro.. Its function is as follows. Removes 5-oxoproline from various penultimate amino acid residues except L-proline. This Staphylococcus aureus (strain Mu3 / ATCC 700698) protein is Pyrrolidone-carboxylate peptidase.